Reading from the N-terminus, the 302-residue chain is 4-hydroxy-tetrahydrodipicolinate synthase (302 aa).

Thr-55 serves as a coordination point for pyruvate. Catalysis depends on Tyr-144, which acts as the Proton donor/acceptor. Residue Lys-172 is the Schiff-base intermediate with substrate of the active site. Position 214 (Val-214) interacts with pyruvate.

Belongs to the DapA family. As to quaternary structure, homotetramer; dimer of dimers.

Its subcellular location is the cytoplasm. The enzyme catalyses L-aspartate 4-semialdehyde + pyruvate = (2S,4S)-4-hydroxy-2,3,4,5-tetrahydrodipicolinate + H2O + H(+). It participates in amino-acid biosynthesis; L-lysine biosynthesis via DAP pathway; (S)-tetrahydrodipicolinate from L-aspartate: step 3/4. In terms of biological role, catalyzes the condensation of (S)-aspartate-beta-semialdehyde [(S)-ASA] and pyruvate to 4-hydroxy-tetrahydrodipicolinate (HTPA). In Prochlorococcus marinus (strain NATL2A), this protein is 4-hydroxy-tetrahydrodipicolinate synthase.